Consider the following 339-residue polypeptide: DNA-directed RNA polymerase subunit alpha (339 aa).

Positions 1-233 (MVREEVAGST…DLFLPFLHAE (233 aa)) are alpha N-terminal domain (alpha-NTD). The alpha C-terminal domain (alpha-CTD) stretch occupies residues 264 to 339 (KKGIPLNCIF…IDLLKNKLSF (76 aa)).

Belongs to the RNA polymerase alpha chain family. In plastids the minimal PEP RNA polymerase catalytic core is composed of four subunits: alpha, beta, beta', and beta''. When a (nuclear-encoded) sigma factor is associated with the core the holoenzyme is formed, which can initiate transcription.

The protein localises to the plastid. It localises to the chloroplast. It catalyses the reaction RNA(n) + a ribonucleoside 5'-triphosphate = RNA(n+1) + diphosphate. Functionally, DNA-dependent RNA polymerase catalyzes the transcription of DNA into RNA using the four ribonucleoside triphosphates as substrates. The sequence is that of DNA-directed RNA polymerase subunit alpha from Eremopyrum distans.